We begin with the raw amino-acid sequence, 496 residues long: Cytosol aminopeptidase (496 aa).

Mn(2+) contacts are provided by Lys258 and Asp263. The active site involves Lys270. Positions 281, 340, and 342 each coordinate Mn(2+). Arg344 is a catalytic residue.

Belongs to the peptidase M17 family. Mn(2+) serves as cofactor.

It localises to the cytoplasm. It carries out the reaction Release of an N-terminal amino acid, Xaa-|-Yaa-, in which Xaa is preferably Leu, but may be other amino acids including Pro although not Arg or Lys, and Yaa may be Pro. Amino acid amides and methyl esters are also readily hydrolyzed, but rates on arylamides are exceedingly low.. It catalyses the reaction Release of an N-terminal amino acid, preferentially leucine, but not glutamic or aspartic acids.. Functionally, presumably involved in the processing and regular turnover of intracellular proteins. Catalyzes the removal of unsubstituted N-terminal amino acids from various peptides. The protein is Cytosol aminopeptidase (pepA) of Helicobacter pylori (strain J99 / ATCC 700824) (Campylobacter pylori J99).